Here is a 594-residue protein sequence, read N- to C-terminus: Frizzled and smoothened-like protein A (594 aa).

The N-terminal stretch at 1-22 is a signal peptide; it reads MVDIRKSLFFIIFFIFYNYVNS. Residues 23 to 248 are Extracellular-facing; the sequence is QKAINSDAFC…NEWYQFKDLT (226 aa). The FZ domain maps to 27-173; sequence NSDAFCQKKT…SNYDLQCLNI (147 aa). Cystine bridges form between cysteine 32–cysteine 98 and cysteine 41–cysteine 91. Residues asparagine 55 and asparagine 106 are each glycosylated (N-linked (GlcNAc...) asparagine). Cysteine 117 and cysteine 170 form a disulfide bridge. 4 N-linked (GlcNAc...) asparagine glycosylation sites follow: asparagine 182, asparagine 189, asparagine 195, and asparagine 206. Residues 249 to 269 form a helical membrane-spanning segment; the sequence is TVTGVISFVCIFFNIFIYGFL. Topologically, residues 270–277 are cytoplasmic; the sequence is NKKHDRHT. A helical transmembrane segment spans residues 278 to 298; sequence IGILCLSFSLWCCMLSDLIVA. The Extracellular portion of the chain corresponds to 299–329; that stretch reads SSPDYSLVCPEPGRFARIHDSRCVANGIIFQ. A helical membrane pass occupies residues 330-350; sequence WGAVCTTMFWSAMAIDLYLVI. The Cytoplasmic segment spans residues 351–361; sequence KKLSLPAFTVK. Residues 362–382 traverse the membrane as a helical segment; that stretch reads YFVAAIFTLALLFTTVPLAWD. Over 383–403 the chain is Extracellular; that stretch reads DYGYGFGGVGCWIMSNSVQNG. A helical transmembrane segment spans residues 404–424; the sequence is CFWIPMLICLLIGAVSICLII. Residues 425–448 lie on the Cytoplasmic side of the membrane; the sequence is YEIVKVFKNVGRSGISIILANARL. Residues 449 to 469 traverse the membrane as a helical segment; sequence FGIVSFIFIEYIYLFVYHFWV. Topologically, residues 470–507 are extracellular; that stretch reads QENTEKFTQNITDWVICVQTTGSSDGCPLPKAVPYATQ. A glycan (N-linked (GlcNAc...) asparagine) is linked at asparagine 479. A helical transmembrane segment spans residues 508 to 528; sequence FIFLFFLRLLGIEVCIFYGIN. Residues 529 to 594 lie on the Cytoplasmic side of the membrane; that stretch reads SRSKNIILES…SKNGGDDDDL (66 aa).

The protein belongs to the G-protein coupled receptor Fz/Smo family.

Its subcellular location is the membrane. This is Frizzled and smoothened-like protein A (fslA) from Dictyostelium discoideum (Social amoeba).